A 267-amino-acid polypeptide reads, in one-letter code: Undecaprenyl-diphosphatase (267 aa).

Transmembrane regions (helical) follow at residues 7–29 (LILGIIEGLTEFLPVSSTGHMIL), 41–61 (FWKSFLIIIQLGSILAVIFVF), 69–89 (LDIWLKLAAGFFPTGVIGLFV), 96–116 (LFNGWVVVGMLIFGGVVFILI), 173–193 (AAEFSFLLAIPTMIIATAYSI), 207–227 (IPLGIGFITAFVVAVLVIKFF), and 239–259 (FGIYRIILGFVFFYLYYSGIL).

Belongs to the UppP family.

The protein localises to the cell inner membrane. It carries out the reaction di-trans,octa-cis-undecaprenyl diphosphate + H2O = di-trans,octa-cis-undecaprenyl phosphate + phosphate + H(+). Functionally, catalyzes the dephosphorylation of undecaprenyl diphosphate (UPP). Confers resistance to bacitracin. The protein is Undecaprenyl-diphosphatase of Campylobacter jejuni subsp. jejuni serotype O:6 (strain 81116 / NCTC 11828).